The sequence spans 136 residues: Large ribosomal subunit protein uL16c (136 aa).

Belongs to the universal ribosomal protein uL16 family. As to quaternary structure, part of the 50S ribosomal subunit.

The protein resides in the plastid. It localises to the chloroplast. In Oryza sativa (Rice), this protein is Large ribosomal subunit protein uL16c.